A 472-amino-acid polypeptide reads, in one-letter code: Glutamyl-tRNA(Gln) amidotransferase subunit A (472 aa).

Active-site charge relay system residues include Lys69 and Ser144. Residue Ser168 is the Acyl-ester intermediate of the active site.

This sequence belongs to the amidase family. GatA subfamily. As to quaternary structure, heterotrimer of A, B and C subunits.

The enzyme catalyses L-glutamyl-tRNA(Gln) + L-glutamine + ATP + H2O = L-glutaminyl-tRNA(Gln) + L-glutamate + ADP + phosphate + H(+). In terms of biological role, allows the formation of correctly charged Gln-tRNA(Gln) through the transamidation of misacylated Glu-tRNA(Gln) in organisms which lack glutaminyl-tRNA synthetase. The reaction takes place in the presence of glutamine and ATP through an activated gamma-phospho-Glu-tRNA(Gln). The polypeptide is Glutamyl-tRNA(Gln) amidotransferase subunit A (Sulfurisphaera tokodaii (strain DSM 16993 / JCM 10545 / NBRC 100140 / 7) (Sulfolobus tokodaii)).